Reading from the N-terminus, the 265-residue chain is 4-hydroxy-tetrahydrodipicolinate reductase (265 aa).

Residues 7–12 (GASGRM), aspartate 33, 96–98 (GTT), and 120–123 (AANF) each bind NAD(+). Histidine 153 acts as the Proton donor/acceptor in catalysis. Position 154 (histidine 154) interacts with (S)-2,3,4,5-tetrahydrodipicolinate. Lysine 157 acts as the Proton donor in catalysis. Residue 163-164 (GT) participates in (S)-2,3,4,5-tetrahydrodipicolinate binding.

This sequence belongs to the DapB family.

The protein localises to the cytoplasm. It carries out the reaction (S)-2,3,4,5-tetrahydrodipicolinate + NAD(+) + H2O = (2S,4S)-4-hydroxy-2,3,4,5-tetrahydrodipicolinate + NADH + H(+). It catalyses the reaction (S)-2,3,4,5-tetrahydrodipicolinate + NADP(+) + H2O = (2S,4S)-4-hydroxy-2,3,4,5-tetrahydrodipicolinate + NADPH + H(+). It functions in the pathway amino-acid biosynthesis; L-lysine biosynthesis via DAP pathway; (S)-tetrahydrodipicolinate from L-aspartate: step 4/4. Catalyzes the conversion of 4-hydroxy-tetrahydrodipicolinate (HTPA) to tetrahydrodipicolinate. This chain is 4-hydroxy-tetrahydrodipicolinate reductase, found in Cupriavidus necator (strain ATCC 17699 / DSM 428 / KCTC 22496 / NCIMB 10442 / H16 / Stanier 337) (Ralstonia eutropha).